Here is a 475-residue protein sequence, read N- to C-terminus: Cytosolic non-specific dipeptidase (475 aa).

The residue at position 58 (S58) is a Phosphoserine. Position 99 (H99) interacts with Mn(2+). Residue D101 is part of the active site. D132 lines the Mn(2+) pocket. The active-site Proton acceptor is E166. Substrate-binding positions include 166–167 (EE), D195, and H228. 2 residues coordinate Mn(2+): E167 and D195. S299 bears the Phosphoserine mark. Substrate is bound by residues T330, R343, S417, and H445. H445 is a Mn(2+) binding site.

The protein belongs to the peptidase M20A family. As to quaternary structure, homodimer. It depends on Mn(2+) as a cofactor. In terms of tissue distribution, highly expressed in the parafascicular nucleus of the thalamus, tuberomammillary nucleus of the hypothalamus and the mitral cell layer of the olfactory bulb.

It is found in the cytoplasm. It catalyses the reaction Hydrolysis of dipeptides, preferentially hydrophobic dipeptides including prolyl amino acids.. The catalysed reaction is L-threonyl-L-threonine + H2O = 2 L-threonine. It carries out the reaction L-threonyl-L-serine + H2O = L-threonine + L-serine. The enzyme catalyses L-seryl-L-threonine + H2O = L-threonine + L-serine. It catalyses the reaction L-cysteinylglycine + H2O = L-cysteine + glycine. The catalysed reaction is L-alanyl-L-cysteine + H2O = L-cysteine + L-alanine. It carries out the reaction (S)-lactate + L-phenylalanine = N-[(S)-lactoyl]-L-phenylalanine + H2O. Inhibited by bestatin. In terms of biological role, catalyzes the peptide bond hydrolysis in dipeptides, displaying a non-redundant activity toward threonyl dipeptides. Mediates threonyl dipeptide catabolism in a tissue-specific way. Has high dipeptidase activity toward cysteinylglycine, an intermediate metabolite in glutathione metabolism. Metabolizes N-lactoyl-amino acids, both through hydrolysis to form lactic acid and amino acids, as well as through their formation by reverse proteolysis. Plays a role in the regulation of cell cycle arrest and apoptosis. The sequence is that of Cytosolic non-specific dipeptidase (Cndp2) from Mus musculus (Mouse).